Consider the following 177-residue polypeptide: 3-hydroxydecanoyl-[acyl-carrier-protein] dehydratase (177 aa).

His-71 is a catalytic residue.

The protein belongs to the thioester dehydratase family. FabA subfamily. In terms of assembly, homodimer.

Its subcellular location is the cytoplasm. It carries out the reaction a (3R)-hydroxyacyl-[ACP] = a (2E)-enoyl-[ACP] + H2O. The enzyme catalyses (3R)-hydroxydecanoyl-[ACP] = (2E)-decenoyl-[ACP] + H2O. It catalyses the reaction (2E)-decenoyl-[ACP] = (3Z)-decenoyl-[ACP]. The protein operates within lipid metabolism; fatty acid biosynthesis. Its function is as follows. Necessary for the introduction of cis unsaturation into fatty acids. Catalyzes the dehydration of (3R)-3-hydroxydecanoyl-ACP to E-(2)-decenoyl-ACP and then its isomerization to Z-(3)-decenoyl-ACP. Can catalyze the dehydratase reaction for beta-hydroxyacyl-ACPs with saturated chain lengths up to 16:0, being most active on intermediate chain length. In Wigglesworthia glossinidia brevipalpis, this protein is 3-hydroxydecanoyl-[acyl-carrier-protein] dehydratase.